The primary structure comprises 93 residues: MQTAYWVMLMMMVCITAPLPEGGKPNSGIRGLVPNDLTPQHTLRSLISRRQTDVLLDATLLTTPAPEQRLFCFWKSCTWRPYPWRRRDLNGKR.

An N-terminal signal peptide occupies residues 1 to 18; that stretch reads MQTAYWVMLMMMVCITAP. The propeptide occupies 19 to 69; the sequence is LPEGGKPNSGIRGLVPNDLTPQHTLRSLISRRQTDVLLDATLLTTPAPEQR. Cys-72 and Cys-77 are disulfide-bonded. Trp-74 carries the D-tryptophan modification. Positions 79-93 are excised as a propeptide; sequence WRPYPWRRRDLNGKR.

The protein belongs to the conotoxin C superfamily. Consomatin family. As to expression, expressed by the venom duct.

It localises to the secreted. Functionally, moderately activates human somatostatin receptors (SSTR) with a preferential activation of SSTR1 and SSTR4. In vivo, does not cause behavioral changes in mice within a few minutes of intracranial injection, but causes a progressive loss of movement thereafter. Four to five hours after injection, mice recover, even with the highest dose tested. Shows antinociception and antihyperalgesia activities in two mouse models of acute pain, most probably by acting outside the central nervous system. The sequence is that of Consomatin G2 from Conus geographus (Geography cone).